We begin with the raw amino-acid sequence, 84 residues long: Antimicrobial peptide MeuNaTxbeta-2 (84 aa).

Positions 1-20 (MMKTVIVLIVFSLVMIVVKS) are cleaved as a signal peptide. An LCN-type CS-alpha/beta domain is found at 21 to 83 (DNGYLLDKYT…LWHYETNRCR (63 aa)). Disulfide bonds link C32-C82, C36-C57, C43-C64, and C47-C66.

In terms of tissue distribution, expressed by the venom gland.

The protein resides in the secreted. Functionally, antimicrobial peptide with activity against both Gram-positive and -negative bacteria. The polypeptide is Antimicrobial peptide MeuNaTxbeta-2 (Mesobuthus eupeus (Lesser Asian scorpion)).